The chain runs to 445 residues: RING finger and transmembrane domain-containing protein 2 (445 aa).

At 1-183 (MWLLAAHQVL…LLAKLCFQHK (183 aa)) the chain is on the extracellular side. The segment at 12-41 (KMQRRHSSNTDNIPPERSRSQALSPEASVD) is disordered. A helical membrane pass occupies residues 184 to 203 (LGIAVCIGMASTFAYANSTL). Topologically, residues 204-215 (REQVSLKEKRSV) are cytoplasmic. Residues 216–236 (LVILWILAFLAGNTMYVLYTF) form a helical membrane-spanning segment. The Extracellular portion of the chain corresponds to 237–256 (SSQQLYSSLIFLKPNLETLD). The helical transmembrane segment at 257 to 277 (FFDLLWIVGIADFVLKYITIA) threads the bilayer. Residues 278 to 330 (LKCLIVALPKIILAVKSKGKFYLVIEELSQLFRSLVPIQLWYKYIMGDDSSNS) lie on the Cytoplasmic side of the membrane. A helical transmembrane segment spans residues 331–351 (YFLGGVLIVLYSLCKSFDICG). At 352–445 (RVGGLRKALK…GATSAHLQVY (94 aa)) the chain is on the extracellular side. Residues 385-423 (CAICQAEFRDPMILLCQHVFCEECLCLWLDRERTCPLCR) form an RING-type zinc finger.

The protein resides in the membrane. Functionally, E3 ubiquitin-protein ligase that negatively regulates IL3-dependent cellular responses through IL3RA ubiquitination and degradation by the proteasome, having an anti-inflammatory effect. This Mus musculus (Mouse) protein is RING finger and transmembrane domain-containing protein 2 (Rnft2).